The following is a 170-amino-acid chain: Elicitin-like protein 1 (170 aa).

Residues Met-1–Gly-19 form the signal peptide. Disulfide bonds link Cys-25/Cys-91, Cys-47/Cys-76, and Cys-71/Cys-118. The tract at residues Gly-122–Cys-170 is disordered. Low complexity predominate over residues Thr-126–Ser-162.

Belongs to the elicitin family.

Its subcellular location is the secreted. In terms of biological role, induces local and distal defense responses (incompatible hypersensitive reaction) in plants from the solanaceae and cruciferae families. Elicits leaf necrosis and causes the accumulation of pathogenesis-related proteins. Might interact with the lipidic molecules of the plasma membrane. The chain is Elicitin-like protein 1 (POD-1) from Pythium oligandrum (Mycoparasitic fungus).